The sequence spans 91 residues: LSCGDVATQMASCINYLRGAGPLPAACCNGVKNLKNSATTTQDRRTACKCLISASKTISGVNFGLAAGLPAKCGVSIPYKISPSTNCDQVN.

Intrachain disulfides connect cysteine 3/cysteine 50, cysteine 13/cysteine 27, cysteine 28/cysteine 73, and cysteine 48/cysteine 87.

It localises to the secreted. Functionally, plant non-specific lipid-transfer proteins transfer phospholipids as well as galactolipids across membranes. May play a role in wax or cutin deposition in the cell walls of expanding epidermal cells and certain secretory tissues. The sequence is that of Non-specific lipid-transfer protein P3 from Vitis sp. (Grape).